Here is a 219-residue protein sequence, read N- to C-terminus: tRNA (guanine-N(7)-)-methyltransferase (219 aa).

S-adenosyl-L-methionine is bound by residues Glu-43, Asp-68, Glu-101, and Asn-124. Substrate-binding residues include Lys-128 and Asp-160.

It belongs to the class I-like SAM-binding methyltransferase superfamily. TrmB family.

The catalysed reaction is guanosine(46) in tRNA + S-adenosyl-L-methionine = N(7)-methylguanosine(46) in tRNA + S-adenosyl-L-homocysteine. The protein operates within tRNA modification; N(7)-methylguanine-tRNA biosynthesis. Its function is as follows. Catalyzes the formation of N(7)-methylguanine at position 46 (m7G46) in tRNA. This Clostridium beijerinckii (strain ATCC 51743 / NCIMB 8052) (Clostridium acetobutylicum) protein is tRNA (guanine-N(7)-)-methyltransferase.